The primary structure comprises 264 residues: Glutamate racemase (264 aa).

Residues 12 to 13 and 44 to 45 contribute to the substrate site; these read DS and YG. Cysteine 76 functions as the Proton donor/acceptor in the catalytic mechanism. Position 77–78 (77–78) interacts with substrate; it reads NT. Cysteine 186 serves as the catalytic Proton donor/acceptor. 187-188 serves as a coordination point for substrate; it reads TH.

Belongs to the aspartate/glutamate racemases family.

It carries out the reaction L-glutamate = D-glutamate. It participates in cell wall biogenesis; peptidoglycan biosynthesis. Its function is as follows. Provides the (R)-glutamate required for cell wall biosynthesis. This Fusobacterium nucleatum subsp. nucleatum (strain ATCC 25586 / DSM 15643 / BCRC 10681 / CIP 101130 / JCM 8532 / KCTC 2640 / LMG 13131 / VPI 4355) protein is Glutamate racemase.